The primary structure comprises 362 residues: Very-long-chain (3R)-3-hydroxyacyl-CoA dehydratase 3 (362 aa).

Residue methionine 1 is modified to N-acetylmethionine. At 1 to 149 the chain is on the cytoplasmic side; the sequence is MENQVLTPHV…ETLTNLRKGY (149 aa). Residues 5–94 form the CS domain; sequence VLTPHVYWAQ…KVSQWWERLT (90 aa). Threonine 7 carries the post-translational modification Phosphothreonine. Residues 111 to 136 adopt a coiled-coil conformation; sequence LDESDAEMELRAKEEERLNKLRLESE. Residues serine 114 and serine 135 each carry the phosphoserine modification. The helical transmembrane segment at 150 to 170 threads the bilayer; it reads LFMYNLVQFLGFSWIFVNLTV. Residues 171-185 lie on the Lumenal side of the membrane; the sequence is RFCILGKESFYDTFH. Residues 186–207 traverse the membrane as a helical segment; that stretch reads TVADMMYFCQMLAVVETINAAI. At 208-217 the chain is on the cytoplasmic side; sequence GVTTSPVLPS. The chain crosses the membrane as a helical span at residues 218-235; it reads LIQLLGRNFILFIIFGTM. Residues 236–241 are Lumenal-facing; the sequence is EEMQNK. A helical transmembrane segment spans residues 242–256; sequence AVVFFVFYLWSAIEI. Over 257–279 the chain is Cytoplasmic; it reads FRYSFYMLTCIDMDWKVLTWLRY. A helical membrane pass occupies residues 280-298; it reads TLWIPLYPLGCLAEAVSVI. Residues tyrosine 286 and glutamate 293 contribute to the active site. The Lumenal portion of the chain corresponds to 299–322; it reads QSIPIFNETGRFSFTLPYPVKIKV. Residues 323–343 form a helical membrane-spanning segment; sequence RFSFFLQIYLIMIFLGLYINF. Topologically, residues 344–362 are cytoplasmic; the sequence is RHLYKQRRRRYGQKKKKIH.

Belongs to the very long-chain fatty acids dehydratase HACD family. May interact with enzymes of the ELO family (including ELOVL1); with those enzymes that mediate condensation, the first of the four steps of the reaction cycle responsible for fatty acids elongation, may be part of a larger fatty acids elongase complex. Interacts with RAC1. Associates with internalized insulin receptor/INSR complexes on Golgi/endosomal membranes; HACD3/PTPLAD1 together with ATIC and PRKAA2/AMPK2 is proposed to be part of a signaling network regulating INSR autophosphorylation and endocytosis. In terms of tissue distribution, highly expressed in testis, kidney, brain, liver and weakly in skeletal muscle, spleen and heart. No expression detected in leukocytes.

The protein localises to the endoplasmic reticulum membrane. The catalysed reaction is a very-long-chain (3R)-3-hydroxyacyl-CoA = a very-long-chain (2E)-enoyl-CoA + H2O. It catalyses the reaction (3R)-hydroxyhexadecanoyl-CoA = (2E)-hexadecenoyl-CoA + H2O. Its pathway is lipid metabolism; fatty acid biosynthesis. Its function is as follows. Catalyzes the third of the four reactions of the long-chain fatty acids elongation cycle. This endoplasmic reticulum-bound enzymatic process, allows the addition of two carbons to the chain of long- and very long-chain fatty acids/VLCFAs per cycle. This enzyme catalyzes the dehydration of the 3-hydroxyacyl-CoA intermediate into trans-2,3-enoyl-CoA, within each cycle of fatty acid elongation. Thereby, it participates in the production of VLCFAs of different chain lengths that are involved in multiple biological processes as precursors of membrane lipids and lipid mediators. May be involved in Rac1-signaling pathways leading to the modulation of gene expression. Promotes insulin receptor/INSR autophosphorylation and is involved in INSR internalization. The sequence is that of Very-long-chain (3R)-3-hydroxyacyl-CoA dehydratase 3 from Homo sapiens (Human).